The chain runs to 442 residues: NAD kinase 2, mitochondrial (442 aa).

The transit peptide at 1-62 (MTCYRGFLLG…RELAGCGSRA (62 aa)) directs the protein to the mitochondrion. Low complexity predominate over residues 24–36 (RGPGAGGPAARPR). Residues 24 to 60 (RGPGAGGPAARPRLGGDGGGRRHLGQGQPRELAGCGS) are disordered. Residue Lys-76 is modified to N6-acetyllysine; alternate. Lys-76 carries the post-translational modification N6-succinyllysine; alternate. Ser-188 carries the phosphoserine modification. Residue Lys-302 is modified to N6-succinyllysine. Lys-317 carries the N6-acetyllysine; alternate modification. Lys-317 is modified (N6-succinyllysine; alternate). The residue at position 367 (Ser-367) is a Phosphoserine. N6-acetyllysine is present on Lys-397.

It belongs to the NAD kinase family. Homodimer. In terms of tissue distribution, widely expressed.

Its subcellular location is the mitochondrion. The catalysed reaction is NAD(+) + ATP = ADP + NADP(+) + H(+). Inhibited by NADH, NADPH and NADP(+). In terms of biological role, mitochondrial NAD(+) kinase that phosphorylates NAD(+) to yield NADP(+). Can use both ATP or inorganic polyphosphate as the phosphoryl donor. Also has weak NADH kinase activity in vitro; however NADH kinase activity is much weaker than the NAD(+) kinase activity and may not be relevant in vivo. The polypeptide is NAD kinase 2, mitochondrial (NADK2) (Homo sapiens (Human)).